The following is a 723-amino-acid chain: Delta-like protein 1 (723 aa).

Positions methionine 1–cysteine 17 are cleaved as a signal peptide. Residues glutamine 18–tryptophan 545 lie on the Extracellular side of the membrane. The DSL domain maps to phenylalanine 177–cysteine 221. 27 disulfides stabilise this stretch: cysteine 179-cysteine 188, cysteine 192-cysteine 204, cysteine 212-cysteine 221, cysteine 226-cysteine 237, cysteine 230-cysteine 243, cysteine 245-cysteine 254, cysteine 257-cysteine 268, cysteine 263-cysteine 274, cysteine 276-cysteine 285, cysteine 292-cysteine 304, cysteine 298-cysteine 314, cysteine 316-cysteine 325, cysteine 332-cysteine 343, cysteine 337-cysteine 352, cysteine 354-cysteine 363, cysteine 370-cysteine 381, cysteine 375-cysteine 391, cysteine 393-cysteine 402, cysteine 409-cysteine 420, cysteine 414-cysteine 429, cysteine 431-cysteine 440, cysteine 447-cysteine 458, cysteine 452-cysteine 467, cysteine 469-cysteine 478, cysteine 485-cysteine 496, cysteine 490-cysteine 505, and cysteine 507-cysteine 516. 3 EGF-like domains span residues cysteine 226–cysteine 254, cysteine 257–cysteine 285, and cysteine 292–cysteine 325. The 32-residue stretch at cysteine 332–cysteine 363 folds into the EGF-like 4; calcium-binding domain. EGF-like domains follow at residues cysteine 370–cysteine 402 and cysteine 409–cysteine 440. One can recognise an EGF-like 7; calcium-binding domain in the interval cysteine 447–cysteine 478. Residue asparagine 477 is glycosylated (N-linked (GlcNAc...) asparagine). The EGF-like 8 domain occupies cysteine 485–cysteine 516. A helical transmembrane segment spans residues valine 546–cysteine 568. Topologically, residues valine 569–valine 723 are cytoplasmic. A Glycyl lysine isopeptide (Lys-Gly) (interchain with G-Cter in ubiquitin) cross-link involves residue lysine 613. Basic and acidic residues predominate over residues alanine 653–lysine 664. A disordered region spans residues alanine 653–threonine 702. Serine 694 carries the post-translational modification Phosphoserine; by PKB. A Phosphoserine modification is found at serine 697. Positions alanine 720–valine 723 are interaction with MAGI1.

As to quaternary structure, homodimer. Interacts with TJP1. Interacts with MAGI1 (via PDZ domain); forms a complex with CTNNB1 and CDH2 and promotes recruitment to the adherens junction and stabilization on the cell surface. Interacts with PSEN1; undergoes a presenilin-dependent gamma-secretase cleavage that releases a Dll1-intracellular form. Interacts with MFAP5. Interacts with MIB1. Interacts with NEURL1B; leads to ubiquitination. Interacts with NEURL1. Interacts with SYNJ2BP; enhances DLL1 protein stability, and promotes Notch signaling in endothelial cells. Interacts with MAGI1, MAGI2, MAGI3 and MPDZ. Interacts (via ubiquitin) with EPN1 (via IUM domain); binding with NOTCH1 attached to neighboring cell, promotes ligand ubiquitination and EPN1 interaction, leading to NECD transendocytosis and Notch signaling. Interacts with NOTCH1. Interacts with NOTCH2NLB; leading to promote Notch signaling pathway in a cell-autonomous manner through inhibition of cis DLL1-NOTCH2 interactions. Ubiquitinated by MIB (MIB1 or MIB2), leading to its endocytosis and subsequent degradation. Ubiquitinated; promotes recycling back to the plasma membrane and confers a strong affinity for NOTCH1. Multi-ubiquitination of Lys-613 by MIB1 promotes both cis and trans-interaction with NOTCH1, as well as activation of Notch signaling. Ubiquitinated by NEURL1B. In terms of processing, phosphorylated in a membrane association-dependent manner. Phosphorylation at Ser-697 requires the presence of Ser-694, whereas phosphorylation at Ser-694 occurs independently of the other site. Phosphorylation is required for full ligand activity in vitro and affects surface presentation, ectodomain shedding, and endocytosis. Post-translationally, O-fucosylated. Can be elongated to a disaccharide by MFNG. As to expression, expressed in heart and pancreas, with lower expression in brain and muscle and almost no expression in placenta, lung, liver and kidney.

The protein localises to the apical cell membrane. Its subcellular location is the cell junction. It localises to the adherens junction. It is found in the membrane raft. In terms of biological role, transmembrane ligand protein of NOTCH1, NOTCH2 and NOTCH3 receptors that binds the extracellular domain (ECD) of Notch receptor in a cis and trans fashion manner. Following transinteraction, ligand cells produce mechanical force that depends of a clathrin-mediated endocytosis, requiring ligand ubiquitination, EPN1 interaction, and actin polymerisation; these events promote Notch receptor extracellular domain (NECD) transendocytosis and triggers Notch signaling through induction of cleavage, hyperphosphorylation, and nuclear accumulation of the intracellular domain of Notch receptors (NICD). Is required for embryonic development and maintenance of adult stem cells in many different tissues and immune systeme; the DLL1-induced Notch signaling is mediated through an intercellular communication that regulates cell lineage, cell specification, cell patterning and morphogenesis through effects on differentiation and proliferation. Plays a role in brain development at different level, namely by regulating neuronal differentiation of neural precursor cells via cell-cell interaction, most likely through the lateral inhibitory system in an endogenous level dependent-manner. During neocortex development, Dll1-Notch signaling transmission is mediated by dynamic interactions between intermediate neurogenic progenitors and radial glia; the cell-cell interactions are mediated via dynamic and transient elongation processes, likely to reactivate/maintain Notch activity in neighboring progenitors, and coordinate progenitor cell division and differentiation across radial and zonal boundaries. During cerebellar development, regulates Bergmann glial monolayer formation and its morphological maturation through a Notch signaling pathway. At the retina and spinal cord level, regulates neurogenesis by preventing the premature differentiation of neural progenitors and also by maintaining progenitors in spinal cord through Notch signaling pathway. Also controls neurogenesis of the neural tube in a progenitor domain-specific fashion along the dorsoventral axis. Maintains quiescence of neural stem cells and plays a role as a fate determinant that segregates asymmetrically to one daughter cell during neural stem cells mitosis, resulting in neuronal differentiation in Dll1-inheriting cell. Plays a role in immune systeme development, namely the development of all T-cells and marginal zone (MZ) B-cells. Blocks the differentiation of progenitor cells into the B-cell lineage while promoting the emergence of a population of cells with the characteristics of a T-cell/NK-cell precursor. Also plays a role during muscle development. During early development, inhibits myoblasts differentiation from the medial dermomyotomal lip and later regulates progenitor cell differentiation. Directly modulates cell adhesion and basal lamina formation in satellite cells through Notch signaling. Maintains myogenic progenitors pool by suppressing differentiation through down-regulation of MYOD1 and is required for satellite cell homing and PAX7 expression. During craniofacial and trunk myogenesis suppresses differentiation of cranial mesoderm-derived and somite-derived muscle via MYOD1 regulation but in cranial mesoderm-derived progenitors, is neither required for satellite cell homing nor for PAX7 expression. Also plays a role during pancreatic cell development. During type B pancreatic cell development, may be involved in the initiation of proximodistal patterning in the early pancreatic epithelium. Stimulates multipotent pancreatic progenitor cells proliferation and pancreatic growth by maintaining HES1 expression and PTF1A protein levels. During fetal stages of development, is required to maintain arterial identity and the responsiveness of arterial endothelial cells for VEGFA through regulation of KDR activation and NRP1 expression. Controls sprouting angiogenesis and subsequent vertical branch formation through regulation on tip cell differentiation. Negatively regulates goblet cell differentiation in intestine and controls secretory fat commitment through lateral inhibition in small intestine. Plays a role during inner ear development; negatively regulates auditory hair cell differentiation. Plays a role during nephron development through Notch signaling pathway. Regulates growth, blood pressure and energy homeostasis. This chain is Delta-like protein 1, found in Homo sapiens (Human).